The following is a 472-amino-acid chain: Argininosuccinate lyase (472 aa).

This sequence belongs to the lyase 1 family. Argininosuccinate lyase subfamily.

It is found in the cytoplasm. It carries out the reaction 2-(N(omega)-L-arginino)succinate = fumarate + L-arginine. It functions in the pathway amino-acid biosynthesis; L-arginine biosynthesis; L-arginine from L-ornithine and carbamoyl phosphate: step 3/3. This Polynucleobacter asymbioticus (strain DSM 18221 / CIP 109841 / QLW-P1DMWA-1) (Polynucleobacter necessarius subsp. asymbioticus) protein is Argininosuccinate lyase.